Here is a 212-residue protein sequence, read N- to C-terminus: Large ribosomal subunit protein uL4 (212 aa).

Belongs to the universal ribosomal protein uL4 family. As to quaternary structure, part of the 50S ribosomal subunit.

Functionally, one of the primary rRNA binding proteins, this protein initially binds near the 5'-end of the 23S rRNA. It is important during the early stages of 50S assembly. It makes multiple contacts with different domains of the 23S rRNA in the assembled 50S subunit and ribosome. Its function is as follows. Forms part of the polypeptide exit tunnel. The protein is Large ribosomal subunit protein uL4 of Phenylobacterium zucineum (strain HLK1).